Consider the following 819-residue polypeptide: Zinc finger protein 658B (819 aa).

The segment at 141 to 166 adopts a C2H2-type 1; degenerate zinc-finger fold; the sequence is YLSDEHGKCRKSFYWKAHLIQHERPH. C2H2-type zinc fingers lie at residues 200–222, 278–300, 306–328, 334–356, 362–384, 390–412, 418–440, 446–468, 474–496, 502–524, 530–552, 558–580, 586–608, and 614–636; these read YECNECGKAFCQNSNLSKHLRIH, YECIECGKTFSKTSHLRAHQRIH, YECVECEKTFSHKTHLSVHQRVH, YECNDCGKSFTYNSALRAHQRIH, YECSDCEKTFAHNSALRAHHRIH, YECNECGRSFAHISVLKAHQRIH, YECNECGRSFTYNSALRAHQRIH, YECSDCEKTFAHNSALKIHQRIH, YKCNECEKTFAHNSALRAHQNIH, YECSECGKTFFQKTRLSTHRRIH, YECSKCGKTFSQKSYLSGHERIH, YECNVCGKTFVYKAALIVHQRIH, YECNECGKTFSQRTHLCAHQRIH, and YECNECGKTFADNSALRAHHRIH. Residues 642–664 form a C2H2-type 16; degenerate zinc finger; that stretch reads YECNDCGKTFSKTSHLRAHLRTR. C2H2-type zinc fingers lie at residues 670-692, 698-720, 726-748, 754-776, and 782-805; these read YECSECGKTFSEKSYVSAHQRVH, YECNVCGKPFAHNSTLRVHQRIH, YECNDCGKTFSQKSHLSAHQRIH, YECNECGKAFAQNSTLRVHQRIH, and YECDECGKTFVRKAALRVHHTRMH.

Belongs to the krueppel C2H2-type zinc-finger protein family.

It localises to the nucleus. Its function is as follows. May be involved in transcriptional regulation. The chain is Zinc finger protein 658B (ZNF658B) from Homo sapiens (Human).